The following is a 315-amino-acid chain: Ribose-phosphate pyrophosphokinase (315 aa).

Residues 40–42 and 99–100 contribute to the ATP site; these read DGE and RQ. Mg(2+) is bound by residues histidine 133 and aspartate 175. Lysine 198 is a catalytic residue. D-ribose 5-phosphate-binding positions include arginine 200, aspartate 224, and 228–232; that span reads DTAHS.

This sequence belongs to the ribose-phosphate pyrophosphokinase family. Class I subfamily. As to quaternary structure, homohexamer. Requires Mg(2+) as cofactor.

The protein resides in the cytoplasm. It carries out the reaction D-ribose 5-phosphate + ATP = 5-phospho-alpha-D-ribose 1-diphosphate + AMP + H(+). Its pathway is metabolic intermediate biosynthesis; 5-phospho-alpha-D-ribose 1-diphosphate biosynthesis; 5-phospho-alpha-D-ribose 1-diphosphate from D-ribose 5-phosphate (route I): step 1/1. Functionally, involved in the biosynthesis of the central metabolite phospho-alpha-D-ribosyl-1-pyrophosphate (PRPP) via the transfer of pyrophosphoryl group from ATP to 1-hydroxyl of ribose-5-phosphate (Rib-5-P). This chain is Ribose-phosphate pyrophosphokinase, found in Thermotoga maritima (strain ATCC 43589 / DSM 3109 / JCM 10099 / NBRC 100826 / MSB8).